The chain runs to 333 residues: Holliday junction branch migration complex subunit RuvB (333 aa).

A large ATPase domain (RuvB-L) region spans residues 1 to 182 (MEERMVSAEA…FGVMARLEYY (182 aa)). ATP is bound by residues I21, R22, G63, K66, T67, T68, 129–131 (EDY), R172, Y182, and R219. T67 is a binding site for Mg(2+). The tract at residues 183 to 253 (NVEELTTIIE…RAIESLERLQ (71 aa)) is small ATPAse domain (RuvB-S). The segment at 256–333 (RLGLDHIDHK…EHFNMEVPNK (78 aa)) is head domain (RuvB-H). R311 and R316 together coordinate DNA.

It belongs to the RuvB family. As to quaternary structure, homohexamer. Forms an RuvA(8)-RuvB(12)-Holliday junction (HJ) complex. HJ DNA is sandwiched between 2 RuvA tetramers; dsDNA enters through RuvA and exits via RuvB. An RuvB hexamer assembles on each DNA strand where it exits the tetramer. Each RuvB hexamer is contacted by two RuvA subunits (via domain III) on 2 adjacent RuvB subunits; this complex drives branch migration. In the full resolvosome a probable DNA-RuvA(4)-RuvB(12)-RuvC(2) complex forms which resolves the HJ.

The protein localises to the cytoplasm. The enzyme catalyses ATP + H2O = ADP + phosphate + H(+). In terms of biological role, the RuvA-RuvB-RuvC complex processes Holliday junction (HJ) DNA during genetic recombination and DNA repair, while the RuvA-RuvB complex plays an important role in the rescue of blocked DNA replication forks via replication fork reversal (RFR). RuvA specifically binds to HJ cruciform DNA, conferring on it an open structure. The RuvB hexamer acts as an ATP-dependent pump, pulling dsDNA into and through the RuvAB complex. RuvB forms 2 homohexamers on either side of HJ DNA bound by 1 or 2 RuvA tetramers; 4 subunits per hexamer contact DNA at a time. Coordinated motions by a converter formed by DNA-disengaged RuvB subunits stimulates ATP hydrolysis and nucleotide exchange. Immobilization of the converter enables RuvB to convert the ATP-contained energy into a lever motion, pulling 2 nucleotides of DNA out of the RuvA tetramer per ATP hydrolyzed, thus driving DNA branch migration. The RuvB motors rotate together with the DNA substrate, which together with the progressing nucleotide cycle form the mechanistic basis for DNA recombination by continuous HJ branch migration. Branch migration allows RuvC to scan DNA until it finds its consensus sequence, where it cleaves and resolves cruciform DNA. The protein is Holliday junction branch migration complex subunit RuvB of Halalkalibacterium halodurans (strain ATCC BAA-125 / DSM 18197 / FERM 7344 / JCM 9153 / C-125) (Bacillus halodurans).